Reading from the N-terminus, the 809-residue chain is uncharacterized protein (809 aa).

Positions 19 to 206 constitute an MHYT domain; sequence HDLRLVLVAS…FTGMSAITIV (188 aa). 7 helical membrane passes run 23-43, 57-77, 92-112, 122-142, 152-172, 186-206, and 224-244; these read LVLV…RLYS, LLLT…IAMV, TLLS…VASA, GGVL…SAFV, ATVG…LLLA, GMLC…ITIV, and TLAV…AVAI. Positions 254-317 constitute a PAS domain; sequence ERIRRLANAA…ADPSREDVRR (64 aa). The GGDEF domain maps to 402–536; the sequence is ESLAVICIDL…GRGVYRFFKR (135 aa). The EAL domain occupies 545-795; that stretch reads RRNLARDLRQ…ALTMWTTAGD (251 aa).

It is found in the cell membrane. This is an uncharacterized protein from Caulobacter vibrioides (strain ATCC 19089 / CIP 103742 / CB 15) (Caulobacter crescentus).